The sequence spans 524 residues: Rho guanine nucleotide exchange factor 3 (524 aa).

Positions Ser75–Arg98 are disordered. Positions Ile121–Ile303 constitute a DH domain. In terms of domain architecture, PH spans Ala290–Lys448.

The protein localises to the cytoplasm. Its function is as follows. Acts as a guanine nucleotide exchange factor (GEF) for RhoA and RhoB GTPases. This Gallus gallus (Chicken) protein is Rho guanine nucleotide exchange factor 3 (Arhgef3).